The primary structure comprises 230 residues: Phosphoenolpyruvate guanylyltransferase (230 aa).

Threonine 139, glycine 155, and serine 158 together coordinate phosphoenolpyruvate.

Belongs to the CofC family.

It carries out the reaction phosphoenolpyruvate + GTP + H(+) = enolpyruvoyl-2-diphospho-5'-guanosine + diphosphate. It participates in cofactor biosynthesis; coenzyme F420 biosynthesis. In terms of biological role, guanylyltransferase that catalyzes the activation of phosphoenolpyruvate (PEP) as enolpyruvoyl-2-diphospho-5'-guanosine, via the condensation of PEP with GTP. It is involved in the biosynthesis of coenzyme F420, a hydride carrier cofactor. This Thermobaculum terrenum (strain ATCC BAA-798 / CCMEE 7001 / YNP1) protein is Phosphoenolpyruvate guanylyltransferase.